Here is a 464-residue protein sequence, read N- to C-terminus: Siroheme synthase (464 aa).

The segment at 1-203 is precorrin-2 dehydrogenase /sirohydrochlorin ferrochelatase; it reads MKYLPLFHNL…GQGAEAERLL (203 aa). NAD(+) is bound by residues 22 to 23 and 43 to 44; these read EI and PE. Residue S128 is modified to Phosphoserine. Residues 216 to 464 are uroporphyrinogen-III C-methyltransferase; it reads GEVYLVGAGP…AWFEGAQGQI (249 aa). P225 lines the S-adenosyl-L-methionine pocket. D248 acts as the Proton acceptor in catalysis. K270 serves as the catalytic Proton donor. Residues 301 to 303, I306, 331 to 332, M383, and G412 each bind S-adenosyl-L-methionine; these read GGD and TA.

This sequence in the N-terminal section; belongs to the precorrin-2 dehydrogenase / sirohydrochlorin ferrochelatase family. It in the C-terminal section; belongs to the precorrin methyltransferase family.

It catalyses the reaction uroporphyrinogen III + 2 S-adenosyl-L-methionine = precorrin-2 + 2 S-adenosyl-L-homocysteine + H(+). The enzyme catalyses precorrin-2 + NAD(+) = sirohydrochlorin + NADH + 2 H(+). It carries out the reaction siroheme + 2 H(+) = sirohydrochlorin + Fe(2+). It participates in cofactor biosynthesis; adenosylcobalamin biosynthesis; precorrin-2 from uroporphyrinogen III: step 1/1. Its pathway is cofactor biosynthesis; adenosylcobalamin biosynthesis; sirohydrochlorin from precorrin-2: step 1/1. The protein operates within porphyrin-containing compound metabolism; siroheme biosynthesis; precorrin-2 from uroporphyrinogen III: step 1/1. It functions in the pathway porphyrin-containing compound metabolism; siroheme biosynthesis; siroheme from sirohydrochlorin: step 1/1. It participates in porphyrin-containing compound metabolism; siroheme biosynthesis; sirohydrochlorin from precorrin-2: step 1/1. In terms of biological role, multifunctional enzyme that catalyzes the SAM-dependent methylations of uroporphyrinogen III at position C-2 and C-7 to form precorrin-2 via precorrin-1. Then it catalyzes the NAD-dependent ring dehydrogenation of precorrin-2 to yield sirohydrochlorin. Finally, it catalyzes the ferrochelation of sirohydrochlorin to yield siroheme. The sequence is that of Siroheme synthase from Pseudomonas fluorescens (strain Pf0-1).